Consider the following 281-residue polypeptide: Diaminopimelate epimerase (281 aa).

The substrate site is built by asparagine 13 and asparagine 66. The Proton donor role is filled by cysteine 75. Substrate-binding positions include 76–77 (GN), asparagine 164, asparagine 197, and 215–216 (ER). The active-site Proton acceptor is the cysteine 224. Substrate is bound at residue 225–226 (GT).

This sequence belongs to the diaminopimelate epimerase family. As to quaternary structure, homodimer.

The protein resides in the cytoplasm. It carries out the reaction (2S,6S)-2,6-diaminopimelate = meso-2,6-diaminopimelate. It functions in the pathway amino-acid biosynthesis; L-lysine biosynthesis via DAP pathway; DL-2,6-diaminopimelate from LL-2,6-diaminopimelate: step 1/1. Functionally, catalyzes the stereoinversion of LL-2,6-diaminopimelate (L,L-DAP) to meso-diaminopimelate (meso-DAP), a precursor of L-lysine and an essential component of the bacterial peptidoglycan. In Gloeothece citriformis (strain PCC 7424) (Cyanothece sp. (strain PCC 7424)), this protein is Diaminopimelate epimerase.